Consider the following 346-residue polypeptide: D-alanine--D-alanine ligase (346 aa).

Residues 133–327 (KLYAKSVGVK…ALADQISLEK (195 aa)) form the ATP-grasp domain. An ATP-binding site is contributed by 159–211 (LSFPCIIKPARLGSSIGISIVKDEKDLEYAKDVGFEFDNDLVVEEFKNNIKEY). Residues aspartate 284, glutamate 296, and asparagine 298 each coordinate Mg(2+).

This sequence belongs to the D-alanine--D-alanine ligase family. Requires Mg(2+) as cofactor. Mn(2+) is required as a cofactor.

It is found in the cytoplasm. The catalysed reaction is 2 D-alanine + ATP = D-alanyl-D-alanine + ADP + phosphate + H(+). It participates in cell wall biogenesis; peptidoglycan biosynthesis. Functionally, cell wall formation. The protein is D-alanine--D-alanine ligase of Campylobacter jejuni subsp. jejuni serotype O:2 (strain ATCC 700819 / NCTC 11168).